We begin with the raw amino-acid sequence, 376 residues long: Lipoyl synthase 1, mitochondrial (376 aa).

Cys109, Cys114, Cys120, Cys140, Cys144, Cys147, and Ser356 together coordinate [4Fe-4S] cluster. A Radical SAM core domain is found at 125–345 (ETGTATATIM…QTLGMEMGFR (221 aa)).

Belongs to the radical SAM superfamily. Lipoyl synthase family. The cofactor is [4Fe-4S] cluster.

It localises to the mitochondrion. The enzyme catalyses [[Fe-S] cluster scaffold protein carrying a second [4Fe-4S](2+) cluster] + N(6)-octanoyl-L-lysyl-[protein] + 2 oxidized [2Fe-2S]-[ferredoxin] + 2 S-adenosyl-L-methionine + 4 H(+) = [[Fe-S] cluster scaffold protein] + N(6)-[(R)-dihydrolipoyl]-L-lysyl-[protein] + 4 Fe(3+) + 2 hydrogen sulfide + 2 5'-deoxyadenosine + 2 L-methionine + 2 reduced [2Fe-2S]-[ferredoxin]. It functions in the pathway protein modification; protein lipoylation via endogenous pathway; protein N(6)-(lipoyl)lysine from octanoyl-[acyl-carrier-protein]: step 2/2. In terms of biological role, catalyzes the radical-mediated insertion of two sulfur atoms into the C-6 and C-8 positions of the octanoyl moiety bound to the lipoyl domains of lipoate-dependent enzymes, thereby converting the octanoylated domains into lipoylated derivatives. The chain is Lipoyl synthase 1, mitochondrial from Pisum sativum (Garden pea).